The primary structure comprises 599 residues: Adenine deaminase (599 aa).

The segment at 1–31 (MARSNRRGGRGDPEDDPAWAPPGHRCAGERA) is disordered.

The protein belongs to the metallo-dependent hydrolases superfamily. Adenine deaminase family. Mn(2+) is required as a cofactor.

It carries out the reaction adenine + H2O + H(+) = hypoxanthine + NH4(+). The sequence is that of Adenine deaminase from Methanopyrus kandleri (strain AV19 / DSM 6324 / JCM 9639 / NBRC 100938).